Here is a 138-residue protein sequence, read N- to C-terminus: Protein E6 (138 aa).

Zinc fingers lie at residues 25-61 (CNFC…CAAC) and 98-134 (CLIC…CRHC).

It belongs to the papillomaviridae E6 protein family. In terms of assembly, forms homodimers. Interacts with ubiquitin-protein ligase UBE3A/E6-AP; this interaction stimulates UBE3A ubiquitin activity. Interacts with host BAK1.

It is found in the host cytoplasm. Its subcellular location is the host nucleus. In terms of biological role, plays a major role in the induction and maintenance of cellular transformation. E6 associates with host UBE3A/E6-AP ubiquitin-protein ligase and modulates its activity. Protects host keratinocytes from apoptosis by mediating the degradation of host BAK1. May also inhibit host immune response. The chain is Protein E6 from Homo sapiens (Human).